The chain runs to 450 residues: 23S rRNA (uracil(1939)-C(5))-methyltransferase RlmD (450 aa).

The tract at residues 1-22 (MARNKGGLRFQPSGGARGPAIP) is disordered. Positions 20 to 78 (AIPVGKKQRLTIERLAHDGRGIAHEAGMTWFVSGGLPGEELEARVLGARSKVVDARSER) constitute a TRAM domain. Cys-91, Cys-97, Cys-100, and Cys-179 together coordinate [4Fe-4S] cluster. The S-adenosyl-L-methionine site is built by Gln-283, Phe-312, Asn-317, Glu-333, Asp-360, and Asp-381. The Nucleophile role is filled by Cys-407.

The protein belongs to the class I-like SAM-binding methyltransferase superfamily. RNA M5U methyltransferase family. RlmD subfamily.

The catalysed reaction is uridine(1939) in 23S rRNA + S-adenosyl-L-methionine = 5-methyluridine(1939) in 23S rRNA + S-adenosyl-L-homocysteine + H(+). Its function is as follows. Catalyzes the formation of 5-methyl-uridine at position 1939 (m5U1939) in 23S rRNA. In Pseudomonas aeruginosa (strain UCBPP-PA14), this protein is 23S rRNA (uracil(1939)-C(5))-methyltransferase RlmD.